The following is a 201-amino-acid chain: MTLYQIKPLFQSLLRPTMFWLYKHHVTANHITLAALALSLLTGLLLMLAAQPILFLLLPIVLFIRMALNALDGMLARECNQQTRLGAILNETGDVISDIALYLPFLFLPESNASLVILMLFCTILTEFCGLLAQTINGVRSYAGPFGKSDRALIFGLWGLAVAIYPQWMQWNNLLWSIASILLLWTAINRCRSVLLMSAEI.

Topologically, residues 1–43 are periplasmic; that stretch reads MTLYQIKPLFQSLLRPTMFWLYKHHVTANHITLAALALSLLTG. A helical transmembrane segment spans residues 44 to 64; the sequence is LLLMLAAQPILFLLLPIVLFI. Over 65–84 the chain is Cytoplasmic; the sequence is RMALNALDGMLARECNQQTR. Residues 85–107 traverse the membrane as a helical segment; sequence LGAILNETGDVISDIALYLPFLF. The Periplasmic segment spans residues 108-116; it reads LPESNASLV. Residues 117 to 139 traverse the membrane as a helical segment; the sequence is ILMLFCTILTEFCGLLAQTINGV. Topologically, residues 140–151 are cytoplasmic; the sequence is RSYAGPFGKSDR. The chain crosses the membrane as a helical span at residues 152–172; the sequence is ALIFGLWGLAVAIYPQWMQWN. Residues 173–175 lie on the Periplasmic side of the membrane; that stretch reads NLL. A helical membrane pass occupies residues 176 to 196; that stretch reads WSIASILLLWTAINRCRSVLL. The Cytoplasmic segment spans residues 197–201; sequence MSAEI.

The protein localises to the cell inner membrane. The protein is Inner membrane protein YnbA (ynbA) of Escherichia coli (strain K12).